Here is a 336-residue protein sequence, read N- to C-terminus: Protein-glutamate methylesterase/protein-glutamine glutaminase 3 (336 aa).

Positions 2–119 (KIAIVNDMPM…PNPREAAAPL (118 aa)) constitute a Response regulatory domain. Position 53 is a 4-aspartylphosphate (D53). One can recognise a CheB-type methylesterase domain in the interval 147–336 (VSRRDRLVAI…APRLMEVFTQ (190 aa)). Catalysis depends on residues S159, H186, and D279.

Belongs to the CheB family. Phosphorylated by CheA. Phosphorylation of the N-terminal regulatory domain activates the methylesterase activity.

It localises to the cytoplasm. It catalyses the reaction [protein]-L-glutamate 5-O-methyl ester + H2O = L-glutamyl-[protein] + methanol + H(+). It carries out the reaction L-glutaminyl-[protein] + H2O = L-glutamyl-[protein] + NH4(+). Its function is as follows. Involved in chemotaxis. Part of a chemotaxis signal transduction system that modulates chemotaxis in response to various stimuli. Catalyzes the demethylation of specific methylglutamate residues introduced into the chemoreceptors (methyl-accepting chemotaxis proteins or MCP) by CheR. Also mediates the irreversible deamidation of specific glutamine residues to glutamic acid. This chain is Protein-glutamate methylesterase/protein-glutamine glutaminase 3, found in Pseudomonas syringae pv. tomato (strain ATCC BAA-871 / DC3000).